A 116-amino-acid chain; its full sequence is MTIQRILPSARLSEVSIHNNLAYFAGQVPELTIEQNAYEQTKEVLGLIDKLLAKIGSNKSNILTAQIFLADMKDYAQLNQAWDEWVDHVSPPSRATVEAKLADPHWKVEIVIIATC.

This sequence belongs to the RutC family.

The sequence is that of RutC family protein HI_1627 from Haemophilus influenzae (strain ATCC 51907 / DSM 11121 / KW20 / Rd).